The chain runs to 507 residues: Pyruvate kinase (507 aa).

Position 50 (Arg50) interacts with substrate. K(+) contacts are provided by Asn52, Ser54, Asp84, and Thr85. 52 to 55 (NFSH) contacts ATP. ATP is bound by residues Arg91 and Lys177. Residue Glu242 participates in Mg(2+) binding. Residues Gly265, Asp266, and Thr298 each contribute to the substrate site. Asp266 lines the Mg(2+) pocket.

It belongs to the pyruvate kinase family. Homotetramer. Mg(2+) serves as cofactor. K(+) is required as a cofactor.

It catalyses the reaction pyruvate + ATP = phosphoenolpyruvate + ADP + H(+). It participates in carbohydrate degradation; glycolysis; pyruvate from D-glyceraldehyde 3-phosphate: step 5/5. The polypeptide is Pyruvate kinase (pyk) (Dictyostelium discoideum (Social amoeba)).